Here is an 899-residue protein sequence, read N- to C-terminus: MADPPDANVPKTSPYLKGDELSSDSGPLLSIFALQEIMQKVRQAQSEYVAATKDVDLTVPDVQKIIDGVKELASETIYKIVQKPIISYRHVVMQSRDRFLRVDTYYERMSEVGDKIDENEPAKFYETVIKKVRHLRTEGAFILHNIPTKDHRGMEIADPEILGVDVKSILPVLTAEHRAMIQHVLDGAIIENGNIATRDVDVYLGACSESVYRIYNRLQGYIEAVQLEELRRTVTWLERLGKRKRMTFSQEFLTDFRRVDTIWVLALRLPANPRVIWDVPRCSIANLIMNIATCLPTGDMFRPNPRIASITLTQRITTTGPFAILTGSTPTAQQLDDVRKIYLALMFPGQIILDLKIDPGERMDPAVRMVAGVVGHLMFTAGPRFTNITQNMARQLDIALADFLLYMYNTRIQVQYGPTGEPLDFRIGRGQYDCNVFRANFQTGTGYNGWGLVDVENREPAPYDHAQRYIRYCNIDSRELIHPATFGIGMNYHCYNEMLRMLVAAGKDTEAAFFRNMLPFHMVRFARINQVINEDLHSAFSMPDDQFNVLLANMVVGQQERVDPVILDISWISIWYAFNRSFEPIRRNEMLESAPLIESVYASELTVMKTDMQQMALLQRRFPDVLIEARPTHFWKAVMEVSPEPVRAIMDLAHSHSFINIRDMMRWIGLPSMQNSMKLVLEEEAWAVANDFEELMLTDQVYMYRDMLPEPRLDDIERFRQEGFYYTNMLDGPPAIDRVVQYTYEVARFEANMGQLRAALRRIMDDERWVRFGGVLRTVRIKFFDSRPPEEILQALPFDYQTNEKGGLTYATIKYANDTTIYYLIYNVEYSNLPDSLVLINPTYVMTKVFMNKRIVERVRVGQALAVMNKRFIAFKGKMRIMDISQALKVGTKLAAPTV.

Residues 1–21 (MADPPDANVPKTSPYLKGDEL) are disordered.

It belongs to the orbivirus VP3 family.

The protein localises to the virion. In terms of biological role, the VP3 protein is one of the five proteins (with VP1, VP4, VP6 and VP7) which form the inner capsid of the virus. In Epizootic hemorrhagic disease virus 1 (EHDV-1), this protein is Core protein VP3 (Segment-3).